The sequence spans 366 residues: Mitochondrial division protein fszB (366 aa).

Residues 70–74 (GGGGN), 157–159 (GTG), Glu-190, and Asp-238 each bind GTP.

This sequence belongs to the FtsZ family.

It is found in the mitochondrion. Its function is as follows. Probably involved in mitochondrion division process. Binds to and hydrolyzes GTP. The chain is Mitochondrial division protein fszB (fszB) from Dictyostelium discoideum (Social amoeba).